Consider the following 213-residue polypeptide: Ribonuclease HII (213 aa).

The 213-residue stretch at 1-213 (MKIIGIDEAG…SWKTAQKFIQ (213 aa)) folds into the RNase H type-2 domain. 3 residues coordinate a divalent metal cation: D7, E8, and D105.

It belongs to the RNase HII family. Requires Mn(2+) as cofactor. The cofactor is Mg(2+).

Its subcellular location is the cytoplasm. The catalysed reaction is Endonucleolytic cleavage to 5'-phosphomonoester.. Endonuclease that specifically degrades the RNA of RNA-DNA hybrids. The sequence is that of Ribonuclease HII from Methanococcoides burtonii (strain DSM 6242 / NBRC 107633 / OCM 468 / ACE-M).